Here is a 137-residue protein sequence, read N- to C-terminus: MEKKTIVLGVIGSDCHAVGNKILDHSFTNAGFNVVNIGVLSSQEDFINAAIETKADLICVSSLYGQGEIDCKGLREKCDEAGLKGIKLFVGGNIVVGKQNWPDVEQRFKAMGFDRVYPPGTSPETTIADMKEVLGVE.

Positions 3-137 (KKTIVLGVIG…ADMKEVLGVE (135 aa)) constitute a B12-binding domain. Residues 13–17 (SDCHA), His-16, 61–63 (SSL), and 93–97 (NIVVG) contribute to the adenosylcob(III)alamin site.

The protein belongs to the methylaspartate mutase GlmS subunit family. In terms of assembly, heterotetramer composed of 2 epsilon subunits (GlmE) and 2 sigma subunits (GlmS). GlmE exists as a homodimer and GlmS as a monomer. Adenosylcob(III)alamin is required as a cofactor.

It carries out the reaction (2S,3S)-3-methyl-L-aspartate = L-glutamate. The protein operates within amino-acid degradation; L-glutamate degradation via mesaconate pathway; acetate and pyruvate from L-glutamate: step 1/4. Its function is as follows. Catalyzes the carbon skeleton rearrangement of L-glutamate to L-threo-3-methylaspartate ((2S,3S)-3-methylaspartate). This chain is Glutamate mutase sigma subunit, found in Clostridium tetanomorphum.